The following is a 188-amino-acid chain: MAGNAYSDEVLGATNWLKEKSNQEVFSFVFKNENVQLNGKDIGWNSYKKELQEDELKSLQRGAETTWDQSEDMEWETTVDEMTKKFGTLTIHDTEKYASQPELCTNSTCIGSRGPGFRALEHTKYSCCGHCRNPEHWGSWFQSLPRWSTEPNLVRDRGGFESVLRCGTVEERLQRAAELGLRYDGASS.

Interacts with host SNRPN. Interacts with host XPO1.

The protein resides in the host nucleus. Plays an essential role in viral protein synthesis. Plays also a role in active nuclear export of mature particles before host cell lysis, by interacting with host XPO1. This chain is Non-structural protein NS2 (NS2), found in Mus musculus (Mouse).